The following is a 274-amino-acid chain: uncharacterized protein (274 aa).

Its subcellular location is the plastid. The protein localises to the chloroplast. This is an uncharacterized protein from Euglena gracilis.